Here is a 413-residue protein sequence, read N- to C-terminus: GMICRHPIYLERTVRMIGSDIANTSKGTGVVHIAPAHGMDDFGIGQKHNLSTESSVNSDGEFMANIAPNLEGKFIFTSGNEAVVEMLKEEMNLFHEHDYKHSYPYDWRTKQPIFVHTSNQWFVDTAMLANKAEAAISGITTYPDNGISSMLNRLQLRSYWCISRQRAWGLPIPVFYHKESGELLLNESTIQHLVSLVLKHGADIWWEGTELLPTQYNADEYERGRDILDIWFDSGVSWDCVLRDSKNRTTQADFYIEGKDQYGGWFQSSLLTSVGLQGVAPYKNLMVHGFVLDEKGQKMSKSIGNVVDPMVLTNGGKNPQRDPAYGADALRWWVAESNVHQDVHISTTIIKSAAESVQKIRNSVRFMLGNLNEFDKMKIVPTPAMLILDLRYRFEDKKLWYVTSMNYPLNLSV.

The 'KMSKS' region motif lies at 298–302 (KMSKS). K301 lines the ATP pocket.

The protein belongs to the class-I aminoacyl-tRNA synthetase family.

It is found in the mitochondrion matrix. The catalysed reaction is tRNA(Ile) + L-isoleucine + ATP = L-isoleucyl-tRNA(Ile) + AMP + diphosphate. The sequence is that of Probable isoleucine--tRNA ligase, mitochondrial from Ciona intestinalis (Transparent sea squirt).